An 844-amino-acid polypeptide reads, in one-letter code: Janus kinase and microtubule-interacting protein 3 (844 aa).

A coiled-coil region spans residues 8 to 258 (SRAKGDKAEA…QLSQVREADR (251 aa)). The segment at 250-290 (LSQVREADRHPGSPRRELPHAAGAGDASDHSGSPEQQLDEK) is disordered. A compositionally biased stretch (basic and acidic residues) spans 254–268 (READRHPGSPRRELP). The segment covering 269-282 (HAAGAGDASDHSGS) has biased composition (low complexity). The stretch at 289 to 421 (EKDARRFQLK…DELSKTLETA (133 aa)) forms a coiled coil. Ser384 is subject to Phosphoserine. Positions 466–483 (SDGSSVSYQTDRTDQTPC) are enriched in polar residues. The segment at 466-489 (SDGSSVSYQTDRTDQTPCTPDDDL) is disordered. 2 coiled-coil regions span residues 493-621 (MAKE…RERK) and 683-834 (VLTL…FLFL).

This sequence belongs to the JAKMIP family. In terms of tissue distribution, specifically expressed in the CNS and endocrine tissues. Also detected in other tissues including heart, testis and prostate.

The protein resides in the golgi apparatus. The chain is Janus kinase and microtubule-interacting protein 3 (JAKMIP3) from Homo sapiens (Human).